A 273-amino-acid polypeptide reads, in one-letter code: Putative expansin-B2 (273 aa).

An N-terminal signal peptide occupies residues 1-29 (MTILVVDRYYMLMNLLFALTCLLLNLTHC). An N-linked (GlcNAc...) asparagine glycan is attached at N36. The 109-residue stretch at 65–173 (GGACGYGNAV…KKVECNYIGK (109 aa)) folds into the Expansin-like EG45 domain. Disulfide bonds link C68–C97, C100–C168, and C105–C111. Positions 186–269 (NSFAVLVAYV…NWQPGAIYKS (84 aa)) constitute an Expansin-like CBD domain.

This sequence belongs to the expansin family. Expansin B subfamily.

It is found in the secreted. Its subcellular location is the cell wall. The protein resides in the membrane. Its function is as follows. May cause loosening and extension of plant cell walls by disrupting non-covalent bonding between cellulose microfibrils and matrix glucans. No enzymatic activity has been found. This chain is Putative expansin-B2 (EXPB2), found in Arabidopsis thaliana (Mouse-ear cress).